Here is a 753-residue protein sequence, read N- to C-terminus: 5-methyltetrahydropteroyltriglutamate--homocysteine methyltransferase (753 aa).

5-methyltetrahydropteroyltri-L-glutamate-binding positions include Arg-17 to Lys-20 and Lys-117. L-homocysteine contacts are provided by residues Ile-431–Ser-433 and Glu-484. Residues Ile-431–Ser-433 and Glu-484 each bind L-methionine. Residues Arg-515 to Cys-516 and Trp-561 contribute to the 5-methyltetrahydropteroyltri-L-glutamate site. Asp-599 serves as a coordination point for L-homocysteine. Position 599 (Asp-599) interacts with L-methionine. Position 605 (Glu-605) interacts with 5-methyltetrahydropteroyltri-L-glutamate. Residues His-641, Cys-643, and Glu-665 each contribute to the Zn(2+) site. The Proton donor role is filled by His-694. Cys-726 serves as a coordination point for Zn(2+).

It belongs to the vitamin-B12 independent methionine synthase family. Zn(2+) is required as a cofactor.

It carries out the reaction 5-methyltetrahydropteroyltri-L-glutamate + L-homocysteine = tetrahydropteroyltri-L-glutamate + L-methionine. The protein operates within amino-acid biosynthesis; L-methionine biosynthesis via de novo pathway; L-methionine from L-homocysteine (MetE route): step 1/1. Functionally, catalyzes the transfer of a methyl group from 5-methyltetrahydrofolate to homocysteine resulting in methionine formation. This chain is 5-methyltetrahydropteroyltriglutamate--homocysteine methyltransferase, found in Shigella flexneri.